The following is a 49-amino-acid chain: IgW transmembrane form Tm2T7/Tm7T7/Tm3T3 (49 aa).

Asparagine 3 carries an N-linked (GlcNAc...) asparagine glycan. A helical membrane pass occupies residues 25-45; that stretch reads VAAFAILFILSFLYSTFVTVV.

As to expression, expressed in the spleen. May also be expressed in other lymphoid tissues.

The protein resides in the membrane. This is IgW transmembrane form Tm2T7/Tm7T7/Tm3T3 from Heterodontus francisci (Horn shark).